Reading from the N-terminus, the 684-residue chain is U4/U6 small nuclear ribonucleoprotein Prp3 (684 aa).

A PWI domain is found at 1–87 (MSLSKRELDE…HSKSNSDRNR (87 aa)). The span at 73–107 (GRSSRHSKSNSDRNRKRELKDVFGDDSEVSKESSG) shows a compositional bias: basic and acidic residues. 2 disordered regions span residues 73-109 (GRSS…SGVK) and 162-183 (FISP…RLPI). Over residues 170–183 (PKISSSSQSERLPI) the composition is skewed to polar residues.

In terms of assembly, component of the precatalytic spliceosome (spliceosome B complex). Component of the U4/U6-U5 tri-snRNP complex, a building block of the precatalytic spliceosome (spliceosome B complex). The U4/U6-U5 tri-snRNP complex is composed of the U4, U6 and U5 snRNAs and at least PRPF3, PRPF4, PRPF6, PRPF8, PRPF31, SNRNP200, TXNL4A, SNRNP40, SNRPB, SNRPD1, SNRPD2, SNRPD3, SNRPE, SNRPF, SNRPG, DDX23, CD2BP2, PPIH, SNU13, EFTUD2, SART1 and USP39, plus LSM2, LSM3, LSM4, LSM5, LSM6, LSM7 and LSM8.

It is found in the nucleus. The protein localises to the nucleus speckle. In terms of biological role, plays a role in pre-mRNA splicing as component of the U4/U6-U5 tri-snRNP complex that is involved in spliceosome assembly, and as component of the precatalytic spliceosome (spliceosome B complex). This Gallus gallus (Chicken) protein is U4/U6 small nuclear ribonucleoprotein Prp3 (PRPF3).